The chain runs to 102 residues: Carboxysome shell protein CcmK2 (102 aa).

Residues 4 to 90 (AVGMIETLGF…PHENLEYVLP (87 aa)) enclose the BMC domain.

This sequence belongs to the bacterial microcompartments protein family. CcmK subfamily. As to quaternary structure, homohexamer. Interacts with CcmO in the carboxysome. Interacts with CcmN.

It localises to the carboxysome. Its function is as follows. One of the shell proteins of the carboxysome, a polyhedral inclusion where RuBisCO (ribulose bisphosphate carboxylase, rbcL-rbcS) is sequestered. Assembles into hexamers which make sheets that form the facets of the polyhedral carboxysome. The hexamer central pore probably regulates metabolite flux. The major shell protein of the carboxysome, a polyhedral inclusion where RuBisCO (ribulose bisphosphate carboxylase, rbcL-rbcS) is sequestered. Hexamers make sheets that form the facets of the polyhedral carboxysome. The shell is 4.5 nm thick, as observed for CcmK hexamers. Required for recruitment of CcmO to the pre-carboxysome. In PCC 7942 there are several CcmK paralogs with presumably functional differences; replacing the central pore residues (34-37) with those of either CcmK4 from this organism (Tyr-Met-Arg-Ala) or from an alpha-type carboxysome forming cyanobacterium (CsoS1 of P.marinus strain MIT 9313, Arg-Glu-Phe-Val) allows the bacterium to make carboxysomes, but the expression level is too low to know if the carboxysome is functional for CO(2) fixation. Functionally, beta-carboxysome assembly initiates when soluble RuBisCO is condensed into a liquid matrix in a pre-carboxysome by the RbcS-like domains of probably both CcmM58 and CcmM35. CcmN interacts with the N-terminus of CcmM58, and then recruits the CcmK2 major shell protein via CcmN's encapsulation peptide. Shell formation requires CcmK proteins and CcmO. CcmL caps the otherwise elongated carboxysome. Once fully encapsulated carboxysomes are formed, they migrate within the cell probably via interactions with the cytoskeleton. This chain is Carboxysome shell protein CcmK2, found in Synechococcus elongatus (strain ATCC 33912 / PCC 7942 / FACHB-805) (Anacystis nidulans R2).